The following is a 98-amino-acid chain: Guanine nucleotide-binding protein subunit gamma 1 (98 aa).

The G protein gamma domain occupies 19–98; that stretch reads GKHRILAELA…GGEGCRCLIL (80 aa). The stretch at 20–50 forms a coiled coil; it reads KHRILAELARVEQEVAFLEKELKEVENTDIV. A regulates lipidation and cell membrane subcellular localization region spans residues 88–94; it reads NGGEGCR. Residue Cys-93 is the site of S-palmitoyl cysteine attachment. Residue Cys-95 is modified to Cysteine methyl ester. Cys-95 is lipidated: S-farnesyl cysteine. Positions 96–98 are cleaved as a propeptide — removed in mature form; sequence LIL.

As to quaternary structure, g proteins are composed of 3 units, alpha, beta and gamma. Interacts with the beta subunit GB1. The dimer GB1-GG1 interacts with NDL1, NDL2 and NDL3. Binds to NUDT7. In terms of tissue distribution, mostly expressed in seedlings (especially at the hypocotyl/root junction), young cauline leaves, open flowers, and floral stems, and, to a lower extent, in roots (restricted to the stele), rosette leaves (restricted to veins), siliques, and unopened floral buds. Also present in hydathods.

The protein localises to the cell membrane. Its subcellular location is the golgi apparatus membrane. The protein resides in the golgi apparatus. It localises to the trans-Golgi network membrane. It is found in the cytoplasm. Functionally, guanine nucleotide-binding proteins (G proteins) are involved as a modulator or transducer in various transmembrane signaling systems. The beta and gamma chains are required for the GTPase activity, for replacement of GDP by GTP, and for G protein-effector interaction. Involved in the abscisic acid (ABA) and ethylene signaling pathways. Regulates acropetal transport of auxin (IAA) in roots and hypocotyls, and thus modulates root architecture (e.g. lateral root formation). The heterotrimeric G-protein controls defense responses to necrotrophic and vascular fungi probably by modulating cell wall-related genes expression; involved in resistance to fungal pathogens such as Alternaria brassicicola, Plectosphaerella cucumerina and Fusarium oxysporum. The sequence is that of Guanine nucleotide-binding protein subunit gamma 1 (GG1) from Arabidopsis thaliana (Mouse-ear cress).